The following is a 302-amino-acid chain: N-acetyl-D-glucosamine kinase (302 aa).

ATP-binding positions include 4 to 11 (GFDVGGTK) and 133 to 140 (GFGGGLVY). Positions 157, 177, 179, and 184 each coordinate Zn(2+).

This sequence belongs to the ROK (NagC/XylR) family. NagK subfamily.

The catalysed reaction is N-acetyl-D-glucosamine + ATP = N-acetyl-D-glucosamine 6-phosphate + ADP + H(+). It functions in the pathway cell wall biogenesis; peptidoglycan recycling. In terms of biological role, catalyzes the phosphorylation of N-acetyl-D-glucosamine (GlcNAc) derived from cell-wall degradation, yielding GlcNAc-6-P. The sequence is that of N-acetyl-D-glucosamine kinase from Vibrio atlanticus (strain LGP32) (Vibrio splendidus (strain Mel32)).